Reading from the N-terminus, the 410-residue chain is uncharacterized protein (410 aa).

The span at Gln-178–Thr-187 shows a compositional bias: polar residues. Disordered regions lie at residues Gln-178–Gln-203 and Arg-236–Gln-272. A compositionally biased stretch (low complexity) spans Gln-188–Ala-198. Basic and acidic residues predominate over residues Arg-236–Thr-263.

This is an uncharacterized protein from Haemophilus influenzae (strain ATCC 51907 / DSM 11121 / KW20 / Rd).